The sequence spans 349 residues: UDP-N-acetylenolpyruvoylglucosamine reductase (349 aa).

Residues 25 to 213 (VGPVARRLVT…VEQGERTDPQ (189 aa)) form the FAD-binding PCMH-type domain. Residue Arg-165 is part of the active site. Ser-242 serves as the catalytic Proton donor. Glu-341 is an active-site residue.

It belongs to the MurB family. Requires FAD as cofactor.

It is found in the cytoplasm. It catalyses the reaction UDP-N-acetyl-alpha-D-muramate + NADP(+) = UDP-N-acetyl-3-O-(1-carboxyvinyl)-alpha-D-glucosamine + NADPH + H(+). Its pathway is cell wall biogenesis; peptidoglycan biosynthesis. Its function is as follows. Cell wall formation. This is UDP-N-acetylenolpyruvoylglucosamine reductase from Mycolicibacterium gilvum (strain PYR-GCK) (Mycobacterium gilvum (strain PYR-GCK)).